A 144-amino-acid chain; its full sequence is NADH dehydrogenase [ubiquinone] 1 alpha subcomplex subunit 13 (144 aa).

The residue at position 2 (A2) is an N-acetylalanine. The helical transmembrane segment at 30–51 (LSGYSMLAIGIGTLIYGHWSIM) threads the bilayer. The tract at residues 102-144 (PDWKVGESVFHTTRWVPPLIGELYGLRTTEEALHASHGFMWYT) is important for inducing cell death.

This sequence belongs to the complex I NDUFA13 subunit family. In terms of assembly, complex I is composed of 45 different subunits. Interacts with CARD15, but not with CARD4. Interacts with STAT3, but not with STAT1, STAT2 and STAT5A. Interacts with OLFM4. (Microbial infection) Interacts with HHV-8 IRF1, in the nucleus, with HPV-16 E6 and SV40 LT. As to expression, widely expressed, with highest expression in heart, skeletal muscle, liver, kidney and placenta. In intestinal mucosa, down-regulated in areas involved in Crohn disease and ulcerative colitis.

Its subcellular location is the mitochondrion inner membrane. The protein localises to the nucleus. In terms of biological role, accessory subunit of the mitochondrial membrane respiratory chain NADH dehydrogenase (Complex I), that is believed not to be involved in catalysis. Complex I functions in the transfer of electrons from NADH to the respiratory chain. The immediate electron acceptor for the enzyme is believed to be ubiquinone. Involved in the interferon/all-trans-retinoic acid (IFN/RA) induced cell death. This apoptotic activity is inhibited by interaction with viral IRF1. Prevents the transactivation of STAT3 target genes. May play a role in CARD15-mediated innate mucosal responses and serve to regulate intestinal epithelial cell responses to microbes. The protein is NADH dehydrogenase [ubiquinone] 1 alpha subcomplex subunit 13 (NDUFA13) of Homo sapiens (Human).